Here is a 357-residue protein sequence, read N- to C-terminus: MTSELDIFVGNTTLIDEDVYRLWLDGYSVTDAVALRVRSGILEQTGATAAVLQSDTMDHYRTFHMLERLLHAPPKLLHQLIFQIPPSRQALLIERYYAFDEAFVREVLGKKLSKGTKKDLDDISTKTGITLKSCRRQFDNFKRVFKVVEEMRGSLVDNIQQHFLLSDRLARDYAAIVFFANNRFETGKKKLQYLSFGDFAFCAELMIQNWTLGAVDSQMDDMDMDLDKEFLQDLKELKVLVADKDLLDLHKSLVCTALRGKLGVFSEMEANFKNLSRGLVNVAAKLTHNKDVRDLFVDLVEKFVEPCRSDHWPLSDVRFFLNQYSASVHSLDGFRHQALWDRYMGTLRGCLLRLYHD.

An N-acetylthreonine modification is found at Thr-2.

As to quaternary structure, binds to internalized FGF1; this interaction is increased in the presence of CSNKB, suggesting a possible cooperative interaction between CSNKB and FIBP in binding to FGF1.

The protein localises to the nucleus. It localises to the endomembrane system. Its function is as follows. May be involved in mitogenic function of FGF1. May mediate with IER2 FGF-signaling in the establishment of laterality in the embryo. In Chlorocebus aethiops (Green monkey), this protein is Acidic fibroblast growth factor intracellular-binding protein (FIBP).